The chain runs to 385 residues: Mannitol-1-phosphate 5-dehydrogenase (385 aa).

An NAD(+)-binding site is contributed by 3–14; the sequence is AVHFGAGNIGRG.

The protein belongs to the mannitol dehydrogenase family.

The catalysed reaction is D-mannitol 1-phosphate + NAD(+) = beta-D-fructose 6-phosphate + NADH + H(+). This Geobacillus thermodenitrificans (strain NG80-2) protein is Mannitol-1-phosphate 5-dehydrogenase.